The sequence spans 31 residues: Cyclotide vico-A (31 aa).

Residues 1-31 (GSIPCAESCVYIPCFTGIAGCSCKNKVCYYN) constitute a cross-link (cyclopeptide (Gly-Asn)). Intrachain disulfides connect Cys-5/Cys-21, Cys-9/Cys-23, and Cys-14/Cys-28.

It belongs to the cyclotide family. Bracelet subfamily. This is a cyclic peptide.

Its function is as follows. Probably participates in a plant defense mechanism. The protein is Cyclotide vico-A of Viola cotyledon (Violeta).